A 731-amino-acid chain; its full sequence is MEKRRMNLPTGPDTLCFDKDEFMKEDFDVDHFVSDCRKRVQLEELRDDLELYYKLLKTAMVELINKDYADFVNLSTNLVGMDRALNQLSVPLGQLREEVLSLRSSVSEGILAVDERMSKQEDIRKKKMSVLRLIQVIRSVEKIEKILNSQSSKDVSSQEASSPLLTGQVLERIATEFNQLQFHAVQSKGMPLLDKVRPRIAGITAMLQQSLEGLLLEGLQTSDVDIVRHCLRTYATIDKTQDAEALVGQVLVKPYVNEVIVEQFVESHPSSLQLMYNKLLEFVPHHCRLLREVTGGAVSSEKGTIVPGYDFLVNSVWPEIVRGLEEKLPSLFNPGDPDAFHQKYTVSMDFVQRFERQCGSQASVKRLRAHPAYHNFSNKWNLPVYFQIRFREVAGSLEAALTDGLEDAPAGSPYCLLASHRTWISLGKCWSDEMFLPLLAHRLWRLTLQILARFSVFVSELSVRPVSNESAKETKKPLTGSKDPSEDQGSHASEASAASISSTQLVYVVSDLGRLQEWLPDLLETVKQKLEMIGFKNFSSISAALEDSQSALSAHVPALSSRIVQDLSESCFSYLKSALEVPRLYRRTNKEVPSTASSYVDSALKPLYQLQSGHGDKVQPAVMQSWLQEALSDSTHRYFETVSDVLNSVKKMEESLKRLKQARRSPATNPVSSSGGGMSDDDKIRLQLALDVEHLGEQIQRMGLQTSDIKSFPALMELVLAARDQAAAEQP.

2 disordered regions span residues 469-496 and 659-680; these read ESAK…SEAS and LKQA…GMSD.

The protein belongs to the COG2 family. As to quaternary structure, component of the conserved oligomeric Golgi complex which is composed of eight different subunits and is required for normal Golgi morphology and localization.

Its subcellular location is the golgi apparatus membrane. Its function is as follows. Required for normal Golgi morphology and function. This is Conserved oligomeric Golgi complex subunit 2 (Cog2) from Mus musculus (Mouse).